Consider the following 215-residue polypeptide: CASP-like protein 1E1 (215 aa).

Over 1–51 the chain is Cytoplasmic; that stretch reads MESSRGKPGLNGSGGGAAAFDYSSRRGYYTGAGAALPPLAAGSRAPPVDPC. The helical transmembrane segment at 52–72 threads the bilayer; that stretch reads CVALRVFVLLGTLASAVVMAA. Residues 73 to 103 lie on the Extracellular side of the membrane; the sequence is DRQSTTVQIAAGEQLAPPLRVPVTAKWTYSS. Residues 104 to 124 traverse the membrane as a helical segment; the sequence is AFVYFVVANAMVFAFSAAALA. The Cytoplasmic portion of the chain corresponds to 125-130; that stretch reads AVRRRS. A helical transmembrane segment spans residues 131 to 151; the sequence is AVVPVMVGDLVAMALLFSAVG. The Extracellular portion of the chain corresponds to 152–185; that stretch reads AAAQFGLLGERGNAHVRWAKVCDVYGPFCERAMA. Residues 186–206 form a helical membrane-spanning segment; sequence AVVVALIAAFADLVLLMLTIL. Residues 207–215 are Cytoplasmic-facing; it reads TIHKASSYY.

The protein belongs to the Casparian strip membrane proteins (CASP) family. In terms of assembly, homodimer and heterodimers.

It is found in the cell membrane. This is CASP-like protein 1E1 from Oryza sativa subsp. indica (Rice).